We begin with the raw amino-acid sequence, 396 residues long: Chorismate synthase (396 aa).

R41 and R47 together coordinate NADP(+). Residues 130-132, G298, 313-317, and R339 contribute to the FMN site; these read RAS and KPIPT.

The protein belongs to the chorismate synthase family. In terms of assembly, homotetramer. FMNH2 is required as a cofactor.

It carries out the reaction 5-O-(1-carboxyvinyl)-3-phosphoshikimate = chorismate + phosphate. The protein operates within metabolic intermediate biosynthesis; chorismate biosynthesis; chorismate from D-erythrose 4-phosphate and phosphoenolpyruvate: step 7/7. Catalyzes the anti-1,4-elimination of the C-3 phosphate and the C-6 proR hydrogen from 5-enolpyruvylshikimate-3-phosphate (EPSP) to yield chorismate, which is the branch point compound that serves as the starting substrate for the three terminal pathways of aromatic amino acid biosynthesis. This reaction introduces a second double bond into the aromatic ring system. The polypeptide is Chorismate synthase (Syntrophomonas wolfei subsp. wolfei (strain DSM 2245B / Goettingen)).